The primary structure comprises 320 residues: Pyrroline-5-carboxylate reductase 2 (320 aa).

Ser2 is subject to N-acetylserine. NADP(+)-binding positions include 6-11 (IGAGQL) and Ser34. NADPH is bound by residues Ala8, Gln10, Leu11, Ser34, Glu36, Asn56, Val70, Lys71, and Ala97. NADP(+) is bound by residues Asn56, 69–72 (AVKP), and 95–97 (CAA). Glu164 serves as a coordination point for L-proline. Asn230 lines the NADPH pocket. L-proline-binding residues include Ala237 and Thr238. Residues 296–305 (TVSTLTPSSP) are compositionally biased toward low complexity. A disordered region spans residues 296–320 (TVSTLTPSSPGKLLTRSLALGGKKD). Ser304 is modified (phosphoserine).

This sequence belongs to the pyrroline-5-carboxylate reductase family. In terms of assembly, homodecamer; composed of 5 homodimers. Interacts with LTO1.

It localises to the cytoplasm. The protein localises to the mitochondrion. The catalysed reaction is L-proline + NADP(+) = (S)-1-pyrroline-5-carboxylate + NADPH + 2 H(+). It carries out the reaction L-proline + NAD(+) = (S)-1-pyrroline-5-carboxylate + NADH + 2 H(+). Its pathway is amino-acid biosynthesis; L-proline biosynthesis; L-proline from L-glutamate 5-semialdehyde: step 1/1. Functionally, oxidoreductase that catalyzes the last step in proline biosynthesis, which corresponds to the reduction of pyrroline-5-carboxylate to L-proline using NAD(P)H. At physiologic concentrations, has higher specific activity in the presence of NADH. Involved in cellular response to oxidative stress. In some cell types, such as erythrocytes, its primary function may be the generation of NADP(+). This is Pyrroline-5-carboxylate reductase 2 (PYCR2) from Pongo abelii (Sumatran orangutan).